The chain runs to 117 residues: UPF0342 protein GWCH70_0629 (117 aa).

The protein belongs to the UPF0342 family.

In Geobacillus sp. (strain WCH70), this protein is UPF0342 protein GWCH70_0629.